Reading from the N-terminus, the 491-residue chain is Ran-binding protein 3-like (491 aa).

The RanBD1 domain maps to 270 to 441; that stretch reads TFKSVLKFPN…VALRSLAKQG (172 aa). A disordered region spans residues 440 to 468; sequence QGDGGPAESQSDTALPQLNGESCDEDEDE. The segment covering 447 to 459 has biased composition (polar residues); that stretch reads ESQSDTALPQLNG.

As to quaternary structure, interacts with SMAD1, SMAD5 and SMAD8.

The protein localises to the nucleus. It localises to the cytoplasm. Its function is as follows. Nuclear export factor for BMP-specific SMAD1/5/8 that plays a critical role in terminating BMP signaling and regulating mesenchymal stem cell differentiation by blocking osteoblast differentiation to promote myogenic differention. Directly recognizes dephosphorylated SMAD1/5/8 and mediates their nuclear export in a Ran-dependent manner. The sequence is that of Ran-binding protein 3-like (Ranbp3l) from Mus musculus (Mouse).